The following is a 406-amino-acid chain: MNKPVAPNSYKTGPDEEGMFGIFGGRFVAETLMPLILELQEAYETAKNDPEFKAELNALSTYYAGRPSKLYYAEGLTKHLGGAKIYFKREDLNHTGSHKINNCLGQILLAKRMGKTRIIAETGAGQHGVASATVAARFGLPCVVYMGATDVERQKPNVFRMKLLGAEVIPVSAGNGTLKDAMNEALRDWVTNVEDTYYLIGTAAGPHPYPELVRDFQSVIGNEARQQILEQEGRLPDVIVAAVGGGSNAIGLFHPFLDDASVKIVGVEAGGRGLDGEEHCASMSAGRPGVLHGNRTYLLQNDDGQILEGHSVSAGLDYPGVGPEHSWLKDSGRVDYVPILDDEALDAFQLCTRTEGIIPALESAHAIAQAVKMAPTMGKDQVMIVNLSGRGDKDVHTVGKLLGMDI.

K99 is subject to N6-(pyridoxal phosphate)lysine.

It belongs to the TrpB family. As to quaternary structure, tetramer of two alpha and two beta chains. The cofactor is pyridoxal 5'-phosphate.

It catalyses the reaction (1S,2R)-1-C-(indol-3-yl)glycerol 3-phosphate + L-serine = D-glyceraldehyde 3-phosphate + L-tryptophan + H2O. The protein operates within amino-acid biosynthesis; L-tryptophan biosynthesis; L-tryptophan from chorismate: step 5/5. In terms of biological role, the beta subunit is responsible for the synthesis of L-tryptophan from indole and L-serine. This is Tryptophan synthase beta chain from Brucella anthropi (strain ATCC 49188 / DSM 6882 / CCUG 24695 / JCM 21032 / LMG 3331 / NBRC 15819 / NCTC 12168 / Alc 37) (Ochrobactrum anthropi).